A 31-amino-acid chain; its full sequence is Cyclotide cter-C (31 aa).

The segment at residues 1–31 is a cross-link (cyclopeptide (Gly-Asp)); it reads GVPCAESCVWIPCTVTALLGCSCKDKVCYLD. 3 cysteine pairs are disulfide-bonded: C4/C21, C8/C23, and C13/C28.

In terms of processing, contains 3 disulfide bonds. This is a cyclic peptide.

Probably participates in a plant defense mechanism. This chain is Cyclotide cter-C, found in Clitoria ternatea (Butterfly pea).